A 575-amino-acid chain; its full sequence is MWSLLLCGLSIALPLSVTADGCKDIFMKNEILSASQPFAFNCTFPPITSGEVSVTWYKNSSKIPVSKIIQSRIHQDETWILFLPMEWGDSGVYQCVIKGRDSCHRIHVNLTVFEKHWCDTSIGGLPNLSDEYKQILHLGKDDSLTCHLHFPKSCVLGPIKWYKDCNEIKGERFTVLETRLLVSNVSAEDRGNYACQAILTHSGKQYEVLNGITVSITERAGYGGSVPKIIYPKNHSIEVQLGTTLIVDCNVTDTKDNTNLRCWRVNNTLVDDYYDESKRIREGVETHVSFREHNLYTVNITFLEVKMEDYGLPFMCHAGVSTAYIILQLPAPDFRAYLIGGLIALVAVAVSVVYIYNIFKIDIVLWYRSAFHSTETIVDGKLYDAYVLYPKPHKESQRHAVDALVLNILPEVLERQCGYKLFIFGRDEFPGQAVANVIDENVKLCRRLIVIVVPESLGFGLLKNLSEEQIAVYSALIQDGMKVILIELEKIEDYTVMPESIQYIKQKHGAIRWHGDFTEQSQCMKTKFWKTVRYHMPPRRCRPFPPVQLLQHTPCYRTAGPELGSRRKKCTLTTG.

An N-terminal signal peptide occupies residues 1 to 19; that stretch reads MWSLLLCGLSIALPLSVTA. Ig-like C2-type domains lie at 20–111, 126–211, and 222–318; these read DGCK…VNLT, PNLS…VLNG, and YGGS…MCHA. The Extracellular portion of the chain corresponds to 20-335; that stretch reads DGCKDIFMKN…ILQLPAPDFR (316 aa). N-linked (GlcNAc...) asparagine glycosylation is found at N41, N59, N109, N127, N184, N234, N250, N266, and N299. C42 and C95 form a disulfide bridge. C146 and C195 are oxidised to a cystine. A disulfide bridge connects residues C249 and C316. The chain crosses the membrane as a helical span at residues 336 to 356; the sequence is AYLIGGLIALVAVAVSVVYIY. Over 357–575 the chain is Cytoplasmic; sequence NIFKIDIVLW…RRKKCTLTTG (219 aa). The 156-residue stretch at 381 to 536 folds into the TIR domain; that stretch reads KLYDAYVLYP…KFWKTVRYHM (156 aa). Residue E467 is part of the active site.

It belongs to the interleukin-1 receptor family. In terms of assembly, interacts with IL1RAP; the association is enhanced by IL36B indicative for an functional signaling complex and inhibited by IL36RN. Expressed in synovial fibroblasts and articular chondrocytes. Expressed in keratinocytes and monocyte-derived dendritic cells. Expressed in monocytes and myeloid dendritic cells; at protein level.

It localises to the membrane. The catalysed reaction is NAD(+) + H2O = ADP-D-ribose + nicotinamide + H(+). Its function is as follows. Receptor for interleukin-36 (IL36A, IL36B and IL36G). After binding to interleukin-36 associates with the coreceptor IL1RAP to form the interleukin-36 receptor complex which mediates interleukin-36-dependent activation of NF-kappa-B, MAPK and other pathways. The IL-36 signaling system is thought to be present in epithelial barriers and to take part in local inflammatory response; it is similar to the IL-1 system. Seems to be involved in skin inflammatory response by induction of the IL-23/IL-17/IL-22 pathway. The protein is Interleukin-1 receptor-like 2 (IL1RL2) of Homo sapiens (Human).